The sequence spans 303 residues: Counting factor 50 (303 aa).

The signal sequence occupies residues 1 to 24; the sequence is MNKMNNIFLIISSIILSIVIFVSG. The Ch-type lysozyme domain occupies 28–240; the sequence is IDFSSEISVG…CSTSSGSASG (213 aa). A glycan (N-linked (GlcNAc...) asparagine) is linked at Asn-67. Residue Glu-125 is part of the active site. Asn-170 carries N-linked (GlcNAc...) asparagine glycosylation. Residues 226 to 303 are S-G-S motif repeats; it reads GSGSGCSTSS…GSGTGSGSSI (78 aa). The segment covering 236 to 292 has biased composition (low complexity); it reads GSASGSASGSASGSASGSNSGSSNSGSSNSGSSNSGSNSGSSNSGSGNSGSSNSGSA. Positions 236–303 are disordered; it reads GSASGSASGS…GSGTGSGSSI (68 aa). The span at 293–303 shows a compositional bias: gly residues; that stretch reads SGSGTGSGSSI.

Belongs to the glycosyl hydrolase 25 family. In terms of assembly, monomer. Component of the counting factor (CF) complex, which includes cf60, cf50, cf45-1 and ctnA.

The protein localises to the secreted. The enzyme catalyses Hydrolysis of (1-&gt;4)-beta-linkages between N-acetylmuramic acid and N-acetyl-D-glucosamine residues in a peptidoglycan and between N-acetyl-D-glucosamine residues in chitodextrins.. Cell-counting factor that limits the maximum size of the multicellular structure during aggregation. Has a very low lysozyme activity. The polypeptide is Counting factor 50 (cf50-1) (Dictyostelium discoideum (Social amoeba)).